An 87-amino-acid chain; its full sequence is Glutaredoxin (87 aa).

The Glutaredoxin domain maps to 1–87; that stretch reads MFVVIFGRPG…YAKENLGLFD (87 aa). A disulfide bridge connects residues C11 and C14.

It belongs to the glutaredoxin family. In terms of assembly, monomer.

The protein localises to the cytoplasm. In terms of biological role, has a glutathione-disulfide oxidoreductase activity in the presence of NADPH and glutathione reductase. Reduces low molecular weight disulfides and proteins. The protein is Glutaredoxin (grx) of Vibrio cholerae serotype O1 (strain ATCC 39315 / El Tor Inaba N16961).